The sequence spans 204 residues: NAD(P)H dehydrogenase (quinone) FQR1 (204 aa).

The Flavodoxin-like domain occupies 5–192; the sequence is VYIVYYSMYG…QQAFHQGQYI (188 aa). FMN-binding positions include 11–15, 112–165, and histidine 136; these read SMYGH and IFYS…SPYG. Tyrosine 13 lines the NAD(+) pocket.

This sequence belongs to the WrbA family. The cofactor is FMN.

Its subcellular location is the cell membrane. The enzyme catalyses a quinone + NADH + H(+) = a quinol + NAD(+). The catalysed reaction is a quinone + NADPH + H(+) = a quinol + NADP(+). Functionally, catalyzes the transfer of electrons from NADH and NADPH to several quinones in vitro. May act as detoxification enzyme, and protect against auxin-induced oxidative stress. The protein is NAD(P)H dehydrogenase (quinone) FQR1 of Arabidopsis thaliana (Mouse-ear cress).